The sequence spans 121 residues: Large ribosomal subunit protein bL20 (121 aa).

Belongs to the bacterial ribosomal protein bL20 family.

Binds directly to 23S ribosomal RNA and is necessary for the in vitro assembly process of the 50S ribosomal subunit. It is not involved in the protein synthesizing functions of that subunit. The protein is Large ribosomal subunit protein bL20 of Koribacter versatilis (strain Ellin345).